The sequence spans 137 residues: Large ribosomal subunit protein uL16 (137 aa).

The protein belongs to the universal ribosomal protein uL16 family. Part of the 50S ribosomal subunit.

Binds 23S rRNA and is also seen to make contacts with the A and possibly P site tRNAs. The chain is Large ribosomal subunit protein uL16 from Xylella fastidiosa (strain M23).